The chain runs to 908 residues: Translation initiation factor IF-2 (908 aa).

Disordered stretches follow at residues 123–154 (EEPP…EELK) and 212–278 (KKEP…VSEK). Residues 407-577 (ERAPIVTIMG…LFEAELLELK (171 aa)) enclose the tr-type G domain. The tract at residues 416–423 (GHVDHGKT) is G1. Residue 416–423 (GHVDHGKT) participates in GTP binding. Residues 441-445 (GITQH) are G2. Positions 463–466 (DTPG) are G3. GTP-binding positions include 463–467 (DTPGH) and 517–520 (NKMD). A G4 region spans residues 517 to 520 (NKMD). The segment at 553–555 (SAI) is G5.

This sequence belongs to the TRAFAC class translation factor GTPase superfamily. Classic translation factor GTPase family. IF-2 subfamily.

Its subcellular location is the cytoplasm. One of the essential components for the initiation of protein synthesis. Protects formylmethionyl-tRNA from spontaneous hydrolysis and promotes its binding to the 30S ribosomal subunits. Also involved in the hydrolysis of GTP during the formation of the 70S ribosomal complex. The sequence is that of Translation initiation factor IF-2 from Amoebophilus asiaticus (strain 5a2).